We begin with the raw amino-acid sequence, 360 residues long: Photosystem II protein D1 (360 aa).

3 helical membrane passes run 29-46 (YIGW…TATC), 118-133 (HFLI…EWEL), and 142-156 (WICV…AATA). Position 118 (H118) interacts with chlorophyll a. Y126 serves as a coordination point for pheophytin a. Positions 170 and 189 each coordinate [CaMn4O5] cluster. The chain crosses the membrane as a helical span at residues 197 to 218 (FHMAGVAGVFGGALFSAMHGSL). H198 contacts chlorophyll a. A quinone is bound by residues H215 and 264–265 (SF). H215 serves as a coordination point for Fe cation. Residue H272 coordinates Fe cation. Residues 274–288 (FLGAWPVVGIWLTAI) form a helical membrane-spanning segment. 4 residues coordinate [CaMn4O5] cluster: H332, E333, D342, and A344. Residues 345-360 (SNSVVPVALTAPSVEA) constitute a propeptide that is removed on maturation.

This sequence belongs to the reaction center PufL/M/PsbA/D family. PSII is composed of 1 copy each of membrane proteins PsbA, PsbB, PsbC, PsbD, PsbE, PsbF, PsbH, PsbI, PsbJ, PsbK, PsbL, PsbM, PsbT, PsbX, PsbY, PsbZ, Psb30/Ycf12, at least 3 peripheral proteins of the oxygen-evolving complex and a large number of cofactors. It forms dimeric complexes. The D1/D2 heterodimer binds P680, chlorophylls that are the primary electron donor of PSII, and subsequent electron acceptors. It shares a non-heme iron and each subunit binds pheophytin, quinone, additional chlorophylls, carotenoids and lipids. D1 provides most of the ligands for the Mn4-Ca-O5 cluster of the oxygen-evolving complex (OEC). There is also a Cl(-1) ion associated with D1 and D2, which is required for oxygen evolution. The PSII complex binds additional chlorophylls, carotenoids and specific lipids. is required as a cofactor. In terms of processing, tyr-161 forms a radical intermediate that is referred to as redox-active TyrZ, YZ or Y-Z. C-terminally processed by CTPA; processing is essential to allow assembly of the oxygen-evolving complex and thus photosynthetic growth.

Its subcellular location is the plastid. It localises to the chloroplast thylakoid membrane. It carries out the reaction 2 a plastoquinone + 4 hnu + 2 H2O = 2 a plastoquinol + O2. Photosystem II (PSII) is a light-driven water:plastoquinone oxidoreductase that uses light energy to abstract electrons from H(2)O, generating O(2) and a proton gradient subsequently used for ATP formation. It consists of a core antenna complex that captures photons, and an electron transfer chain that converts photonic excitation into a charge separation. The D1/D2 (PsbA/PsbD) reaction center heterodimer binds P680, the primary electron donor of PSII as well as several subsequent electron acceptors. This Cyanidioschyzon merolae (strain NIES-3377 / 10D) (Unicellular red alga) protein is Photosystem II protein D1.